The following is a 525-amino-acid chain: GMP synthase [glutamine-hydrolyzing] (525 aa).

In terms of domain architecture, Glutamine amidotransferase type-1 spans 9–207 (RILILDFGSQ…VLDICQCEKL (199 aa)). Catalysis depends on Cys86, which acts as the Nucleophile. Catalysis depends on residues His181 and Glu183. The region spanning 208 to 400 (WTPDAIIEDA…LGLPYDMLYR (193 aa)) is the GMPS ATP-PPase domain. 235–241 (SGGVDSS) is a binding site for ATP.

As to quaternary structure, homodimer.

It carries out the reaction XMP + L-glutamine + ATP + H2O = GMP + L-glutamate + AMP + diphosphate + 2 H(+). Its pathway is purine metabolism; GMP biosynthesis; GMP from XMP (L-Gln route): step 1/1. In terms of biological role, catalyzes the synthesis of GMP from XMP. The polypeptide is GMP synthase [glutamine-hydrolyzing] (Pseudoalteromonas atlantica (strain T6c / ATCC BAA-1087)).